The sequence spans 482 residues: tRNA sulfurtransferase (482 aa).

The region spanning 61 to 165 (LAIRDALTRI…DDRLLLIKGR (105 aa)) is the THUMP domain. Residues 183 to 184 (LI), Lys265, Gly287, and Gln296 each bind ATP. Cys344 and Cys456 are disulfide-bonded. In terms of domain architecture, Rhodanese spans 404 to 482 (FGPNDVILDI…GFNNVKVYRP (79 aa)). Cys456 (cysteine persulfide intermediate) is an active-site residue.

It belongs to the ThiI family.

It is found in the cytoplasm. It catalyses the reaction [ThiI sulfur-carrier protein]-S-sulfanyl-L-cysteine + a uridine in tRNA + 2 reduced [2Fe-2S]-[ferredoxin] + ATP + H(+) = [ThiI sulfur-carrier protein]-L-cysteine + a 4-thiouridine in tRNA + 2 oxidized [2Fe-2S]-[ferredoxin] + AMP + diphosphate. It carries out the reaction [ThiS sulfur-carrier protein]-C-terminal Gly-Gly-AMP + S-sulfanyl-L-cysteinyl-[cysteine desulfurase] + AH2 = [ThiS sulfur-carrier protein]-C-terminal-Gly-aminoethanethioate + L-cysteinyl-[cysteine desulfurase] + A + AMP + 2 H(+). Its pathway is cofactor biosynthesis; thiamine diphosphate biosynthesis. In terms of biological role, catalyzes the ATP-dependent transfer of a sulfur to tRNA to produce 4-thiouridine in position 8 of tRNAs, which functions as a near-UV photosensor. Also catalyzes the transfer of sulfur to the sulfur carrier protein ThiS, forming ThiS-thiocarboxylate. This is a step in the synthesis of thiazole, in the thiamine biosynthesis pathway. The sulfur is donated as persulfide by IscS. The sequence is that of tRNA sulfurtransferase from Escherichia coli O8 (strain IAI1).